We begin with the raw amino-acid sequence, 498 residues long: Lysine--tRNA ligase (498 aa).

Residues Glu-409 and Glu-416 each contribute to the Mg(2+) site.

This sequence belongs to the class-II aminoacyl-tRNA synthetase family. As to quaternary structure, homodimer. Requires Mg(2+) as cofactor.

The protein localises to the cytoplasm. The catalysed reaction is tRNA(Lys) + L-lysine + ATP = L-lysyl-tRNA(Lys) + AMP + diphosphate. The protein is Lysine--tRNA ligase of Coxiella burnetii (strain CbuK_Q154) (Coxiella burnetii (strain Q154)).